The following is a 197-amino-acid chain: dITP/XTP pyrophosphatase (197 aa).

8-13 (TGNPGK) lines the substrate pocket. Residues Glu-40 and Asp-69 each contribute to the Mg(2+) site. Asp-69 functions as the Proton acceptor in the catalytic mechanism. Substrate-binding positions include Ser-70, 154–157 (FGYD), Lys-177, and 182–183 (HR).

Belongs to the HAM1 NTPase family. In terms of assembly, homodimer. Mg(2+) is required as a cofactor.

It carries out the reaction XTP + H2O = XMP + diphosphate + H(+). It catalyses the reaction dITP + H2O = dIMP + diphosphate + H(+). The catalysed reaction is ITP + H2O = IMP + diphosphate + H(+). Its function is as follows. Pyrophosphatase that catalyzes the hydrolysis of nucleoside triphosphates to their monophosphate derivatives, with a high preference for the non-canonical purine nucleotides XTP (xanthosine triphosphate), dITP (deoxyinosine triphosphate) and ITP. Seems to function as a house-cleaning enzyme that removes non-canonical purine nucleotides from the nucleotide pool, thus preventing their incorporation into DNA/RNA and avoiding chromosomal lesions. This is dITP/XTP pyrophosphatase from Pectobacterium atrosepticum (strain SCRI 1043 / ATCC BAA-672) (Erwinia carotovora subsp. atroseptica).